A 267-amino-acid chain; its full sequence is Phosphonates import ATP-binding protein PhnC 2 (267 aa).

The ABC transporter domain maps to Leu-3–Gln-247. An ATP-binding site is contributed by Gly-36–Thr-43.

It belongs to the ABC transporter superfamily. Phosphonates importer (TC 3.A.1.9.1) family. In terms of assembly, the complex is composed of two ATP-binding proteins (PhnC), two transmembrane proteins (PhnE) and a solute-binding protein (PhnD).

The protein localises to the cell inner membrane. The enzyme catalyses phosphonate(out) + ATP + H2O = phosphonate(in) + ADP + phosphate + H(+). Part of the ABC transporter complex PhnCDE involved in phosphonates import. Responsible for energy coupling to the transport system. The protein is Phosphonates import ATP-binding protein PhnC 2 of Pseudomonas aeruginosa (strain UCBPP-PA14).